Reading from the N-terminus, the 88-residue chain is Putative defensin-like protein 228 (88 aa).

The first 27 residues, 1–27 (MMKSAILLMVSCVFMFLVVSYIQDVEG), serve as a signal peptide directing secretion. Disulfide bonds link Cys-32–Cys-88, Cys-42–Cys-66, Cys-50–Cys-82, and Cys-64–Cys-84.

Belongs to the DEFL family.

The protein resides in the secreted. The polypeptide is Putative defensin-like protein 228 (SCRL3) (Arabidopsis thaliana (Mouse-ear cress)).